Reading from the N-terminus, the 894-residue chain is Valine--tRNA ligase (894 aa).

Positions 48-58 (PNVTGFLHMGH) match the 'HIGH' region motif. The 'KMSKS' region motif lies at 527–531 (KMSKS). Residue Lys-530 coordinates ATP. Residues 827–852 (LVDFDEEVKRINKSIEKLTRDIGMLS) adopt a coiled-coil conformation.

It belongs to the class-I aminoacyl-tRNA synthetase family. ValS type 1 subfamily. As to quaternary structure, monomer.

It is found in the cytoplasm. It carries out the reaction tRNA(Val) + L-valine + ATP = L-valyl-tRNA(Val) + AMP + diphosphate. Catalyzes the attachment of valine to tRNA(Val). As ValRS can inadvertently accommodate and process structurally similar amino acids such as threonine, to avoid such errors, it has a 'posttransfer' editing activity that hydrolyzes mischarged Thr-tRNA(Val) in a tRNA-dependent manner. This Bdellovibrio bacteriovorus (strain ATCC 15356 / DSM 50701 / NCIMB 9529 / HD100) protein is Valine--tRNA ligase.